The primary structure comprises 158 residues: SsrA-binding protein (158 aa).

Belongs to the SmpB family.

It is found in the cytoplasm. Required for rescue of stalled ribosomes mediated by trans-translation. Binds to transfer-messenger RNA (tmRNA), required for stable association of tmRNA with ribosomes. tmRNA and SmpB together mimic tRNA shape, replacing the anticodon stem-loop with SmpB. tmRNA is encoded by the ssrA gene; the 2 termini fold to resemble tRNA(Ala) and it encodes a 'tag peptide', a short internal open reading frame. During trans-translation Ala-aminoacylated tmRNA acts like a tRNA, entering the A-site of stalled ribosomes, displacing the stalled mRNA. The ribosome then switches to translate the ORF on the tmRNA; the nascent peptide is terminated with the 'tag peptide' encoded by the tmRNA and targeted for degradation. The ribosome is freed to recommence translation, which seems to be the essential function of trans-translation. The polypeptide is SsrA-binding protein (Bartonella tribocorum (strain CIP 105476 / IBS 506)).